Here is a 306-residue protein sequence, read N- to C-terminus: tRNA-cytidine(32) 2-sulfurtransferase (306 aa).

The PP-loop motif motif lies at 44-49; the sequence is SGGKDS. Positions 119, 122, and 210 each coordinate [4Fe-4S] cluster.

The protein belongs to the TtcA family. Homodimer. Requires Mg(2+) as cofactor. [4Fe-4S] cluster serves as cofactor.

It localises to the cytoplasm. The catalysed reaction is cytidine(32) in tRNA + S-sulfanyl-L-cysteinyl-[cysteine desulfurase] + AH2 + ATP = 2-thiocytidine(32) in tRNA + L-cysteinyl-[cysteine desulfurase] + A + AMP + diphosphate + H(+). It participates in tRNA modification. Its function is as follows. Catalyzes the ATP-dependent 2-thiolation of cytidine in position 32 of tRNA, to form 2-thiocytidine (s(2)C32). The sulfur atoms are provided by the cysteine/cysteine desulfurase (IscS) system. In Photorhabdus laumondii subsp. laumondii (strain DSM 15139 / CIP 105565 / TT01) (Photorhabdus luminescens subsp. laumondii), this protein is tRNA-cytidine(32) 2-sulfurtransferase.